The following is a 405-amino-acid chain: Argininosuccinate synthase (405 aa).

Residues 12-20 and A40 each bind ATP; that span reads AYSGGLDTS. Y92 and S97 together coordinate L-citrulline. G122 contributes to the ATP binding site. 3 residues coordinate L-aspartate: T124, N128, and D129. Residue N128 coordinates L-citrulline. Residues R132, S181, S190, E266, and Y278 each coordinate L-citrulline.

The protein belongs to the argininosuccinate synthase family. Type 1 subfamily. As to quaternary structure, homotetramer.

The protein localises to the cytoplasm. The enzyme catalyses L-citrulline + L-aspartate + ATP = 2-(N(omega)-L-arginino)succinate + AMP + diphosphate + H(+). The protein operates within amino-acid biosynthesis; L-arginine biosynthesis; L-arginine from L-ornithine and carbamoyl phosphate: step 2/3. The protein is Argininosuccinate synthase of Edwardsiella ictaluri (strain 93-146).